The primary structure comprises 279 residues: Putative pyruvate, phosphate dikinase regulatory protein (279 aa).

153-160 (GVSRTSKT) contacts ADP.

The protein belongs to the pyruvate, phosphate/water dikinase regulatory protein family. PDRP subfamily.

It carries out the reaction N(tele)-phospho-L-histidyl/L-threonyl-[pyruvate, phosphate dikinase] + ADP = N(tele)-phospho-L-histidyl/O-phospho-L-threonyl-[pyruvate, phosphate dikinase] + AMP + H(+). The catalysed reaction is N(tele)-phospho-L-histidyl/O-phospho-L-threonyl-[pyruvate, phosphate dikinase] + phosphate + H(+) = N(tele)-phospho-L-histidyl/L-threonyl-[pyruvate, phosphate dikinase] + diphosphate. Its function is as follows. Bifunctional serine/threonine kinase and phosphorylase involved in the regulation of the pyruvate, phosphate dikinase (PPDK) by catalyzing its phosphorylation/dephosphorylation. This Bradyrhizobium sp. (strain ORS 278) protein is Putative pyruvate, phosphate dikinase regulatory protein.